The following is a 122-amino-acid chain: ATP synthase epsilon chain (122 aa).

This sequence belongs to the ATPase epsilon chain family. F-type ATPases have 2 components, CF(1) - the catalytic core - and CF(0) - the membrane proton channel. CF(1) has five subunits: alpha(3), beta(3), gamma(1), delta(1), epsilon(1). CF(0) has three main subunits: a, b and c.

It localises to the cell membrane. Its function is as follows. Produces ATP from ADP in the presence of a proton gradient across the membrane. The protein is ATP synthase epsilon chain of Rhodococcus opacus (strain B4).